Reading from the N-terminus, the 343-residue chain is MKAPRLTDTTLRDGSHPMRHQFTREQVAKIVQALDRAGVPVIEVSHGDGLAGSSLQYGFSHTSEFDLIETARSYAERAKIAALMLPGIGTRQELKEAVARGIQVVRIATQCTEADISEQHFGLAKELGLETVGFLMMAHMRPPEALVEQAKLMESYGADCVYIVDSAGAMLPHDAAARVRALKEALSVQVGFHAHNNLGLGIGNTLAALEAGADQIDGCLRGLGAGAGNAATELLAAVLDRLGLNPGLDVFGLMDAAEYIVAPIMPFQPFPDRDAITIGYAGVYSTFLLHAKRAGEQYGIDPREILVELGRRQAVAGQEDWIIDVALDLSRRRGAGTRKEAHG.

The Pyruvate carboxyltransferase domain occupies 4–254 (PRLTDTTLRD…NPGLDVFGLM (251 aa)). Residue 12–13 (RD) participates in substrate binding. Residue Asp13 coordinates Mn(2+). Catalysis depends on His16, which acts as the Proton acceptor. Substrate is bound by residues Ser166 and His193. 2 residues coordinate Mn(2+): His193 and His195. Tyr284 serves as a coordination point for substrate.

Belongs to the 4-hydroxy-2-oxovalerate aldolase family.

It carries out the reaction (S)-4-hydroxy-2-oxopentanoate = acetaldehyde + pyruvate. The sequence is that of 4-hydroxy-2-oxovalerate aldolase from Chloroflexus aggregans (strain MD-66 / DSM 9485).